A 153-amino-acid chain; its full sequence is Two-component response regulator ARR17 (153 aa).

Residues H21 to L149 enclose the Response regulatory domain. Residue D82 is modified to 4-aspartylphosphate.

The protein belongs to the ARR family. Type-A subfamily. In terms of processing, two-component system major event consists of a His-to-Asp phosphorelay between a sensor histidine kinase (HK) and a response regulator (RR). In plants, the His-to-Asp phosphorelay involves an additional intermediate named Histidine-containing phosphotransfer protein (HPt). This multistep phosphorelay consists of a His-Asp-His-Asp sequential transfer of a phosphate group between first a His and an Asp of the HK protein, followed by the transfer to a conserved His of the HPt protein and finally the transfer to an Asp in the receiver domain of the RR protein.

The protein localises to the nucleus. Functions as a response regulator involved in His-to-Asp phosphorelay signal transduction system. Phosphorylation of the Asp residue in the receiver domain activates the ability of the protein to promote the transcription of target genes. Type-A response regulators seem to act as negative regulators of the cytokinin signaling. The polypeptide is Two-component response regulator ARR17 (ARR17) (Arabidopsis thaliana (Mouse-ear cress)).